A 341-amino-acid polypeptide reads, in one-letter code: tRNA (guanine-N(7)-)-methyltransferase (341 aa).

S-adenosyl-L-methionine contacts are provided by Glu75, Glu100, Asp127, and Asp150. Asp150 is a catalytic residue. Lys154 is a substrate binding site. The interval 156–161 (RHNKRR) is interaction with RNA. Asp186 contributes to the substrate binding site.

It belongs to the class I-like SAM-binding methyltransferase superfamily. TrmB family.

It carries out the reaction guanosine(46) in tRNA + S-adenosyl-L-methionine = N(7)-methylguanosine(46) in tRNA + S-adenosyl-L-homocysteine. It participates in tRNA modification; N(7)-methylguanine-tRNA biosynthesis. In terms of biological role, catalyzes the formation of N(7)-methylguanine at position 46 (m7G46) in tRNA. This chain is tRNA (guanine-N(7)-)-methyltransferase, found in Xanthomonas euvesicatoria pv. vesicatoria (strain 85-10) (Xanthomonas campestris pv. vesicatoria).